Reading from the N-terminus, the 131-residue chain is Putative gamma-taxilin 2 (131 aa).

This sequence belongs to the taxilin family. As to expression, ubiquitously expressed.

The protein is Putative gamma-taxilin 2 (TXLNGY) of Homo sapiens (Human).